The following is a 527-amino-acid chain: MSKDHKDKKRKHSDEATEEVEKKTKVSKKEKKDKKEKKEKKDKKEKKDKSEKKDKSEKKEKKEKKESEDVPTKSSAVVSTGYSQSPALTKLPQSEIDSFLQENEVTVEDPHNLGLRPLLGFDQIDLDSRIASVISKFPTPTPIQAVSWPYLLSGKDVIGVAETGSGKTFAFGVPAINNILTHDKKGLKVLCISPTRELALQIYDNLVDLTANTPLKCVAVYGGVSKHEQVSSLRNASVVVATPGRLIDLLNDGALSLDSIEYLVLDEADRMLEKGFEQDIKSVMQQTNHANRQTLMFTATWPKEVRELASTFMNSPVKVSIGDRNELSANKRITQIVEVIEPYDKEKKLLSLLRKYQSGSNKDDKVLIFALYKKEATRIENLLVRNSFKVSAVHGDLSQQQRTSALGAFKAGKTTLLLATDVAARGLDIPNVKVVINLTFPLTVEDYVHRIGRTGRAGQTGIAHTLFTEHEKHLSGALMNVLRGANQPVPDELLKFGGHTKKKAHSAYGAFFKDVDMTKTAKKIKFD.

The segment covering 1 to 11 (MSKDHKDKKRK) has biased composition (basic residues). The interval 1 to 89 (MSKDHKDKKR…TGYSQSPALT (89 aa)) is disordered. A compositionally biased stretch (basic and acidic residues) spans 12–24 (HSDEATEEVEKKT). The span at 25–44 (KVSKKEKKDKKEKKEKKDKK) shows a compositional bias: basic residues. The span at 45 to 71 (EKKDKSEKKDKSEKKEKKEKKESEDVP) shows a compositional bias: basic and acidic residues. Polar residues predominate over residues 72–89 (TKSSAVVSTGYSQSPALT). Residues 119–145 (LGFDQIDLDSRIASVISKFPTPTPIQA) carry the Q motif motif. In terms of domain architecture, Helicase ATP-binding spans 148–319 (WPYLLSGKDV…STFMNSPVKV (172 aa)). 161–168 (AETGSGKT) is a binding site for ATP. The DEAD box motif lies at 266-269 (DEAD). The 150-residue stretch at 348–497 (KLLSLLRKYQ…PVPDELLKFG (150 aa)) folds into the Helicase C-terminal domain.

It belongs to the DEAD box helicase family. DDX5/DBP2 subfamily.

It localises to the nucleus. The protein localises to the nucleolus. It carries out the reaction ATP + H2O = ADP + phosphate + H(+). Functionally, ATP-dependent RNA helicase required for 60S ribosomal subunit synthesis. Involved in efficient pre-rRNA processing, predominantly at site A3, which is necessary for the normal formation of 25S and 5.8S rRNAs. In Debaryomyces hansenii (strain ATCC 36239 / CBS 767 / BCRC 21394 / JCM 1990 / NBRC 0083 / IGC 2968) (Yeast), this protein is ATP-dependent RNA helicase DBP3 (DBP3).